A 712-amino-acid chain; its full sequence is Probable GTP diphosphokinase RSH3, chloroplastic (712 aa).

The N-terminal 64 residues, 1–64, are a transit peptide targeting the chloroplast; the sequence is MVVATTIALY…LLFSGASVKS (64 aa). Over residues 65–74 the composition is skewed to low complexity; sequence SSSSSSSHPS. The disordered stretch occupies residues 65-84; sequence SSSSSSSHPSVGEELASIRH. The HD domain occupies 237-338; it reads YLQHCVETAM…IKLADRLHNM (102 aa).

The protein belongs to the RelA/SpoT family.

The protein resides in the plastid. Its subcellular location is the chloroplast. The catalysed reaction is GTP + ATP = guanosine 3'-diphosphate 5'-triphosphate + AMP. Its function is as follows. Probable ppGpp (guanosine 3'-diphosphate 5'-diphosphate) synthetase that may be involved in a rapid plant ppGpp-mediated response to pathogens and other stresses. This Arabidopsis thaliana (Mouse-ear cress) protein is Probable GTP diphosphokinase RSH3, chloroplastic (RSH3).